The sequence spans 261 residues: Cytochrome c oxidase subunit 3 (261 aa).

At 1-15 (MTHQTHAYHMVNPSP) the chain is on the mitochondrial matrix side. Residues 16–34 (WPLTGALSALLMTSGLIMW) form a helical membrane-spanning segment. Topologically, residues 35–40 (FHFNST) are mitochondrial intermembrane. The chain crosses the membrane as a helical span at residues 41-66 (TLLMLGLTTNMLTMYQWWRDVIREST). The Mitochondrial matrix segment spans residues 67–72 (FQGHHT). The helical transmembrane segment at 73-105 (PNVQKGLRYGMILFIISEVLFFTGFFWAFYHSS) threads the bilayer. Over 106–128 (LAPTPELGGCWPPTGINPLNPLE) the chain is Mitochondrial intermembrane. A helical transmembrane segment spans residues 129–152 (VPLLNTSVLLASGVSITWAHHSLM). The Mitochondrial matrix portion of the chain corresponds to 153-155 (EGN). The chain crosses the membrane as a helical span at residues 156-183 (RNHMLQALFITIALGVYFTLLQASEYYE). Topologically, residues 184–190 (APFTISD) are mitochondrial intermembrane. Residues 191-223 (GVYGSTFFVATGFHGLHVIIGSTFLIVCFFRQL) form a helical membrane-spanning segment. The Mitochondrial matrix segment spans residues 224-232 (KFHFTSNHH). A helical membrane pass occupies residues 233–256 (FGFEAAAWYWHFVDVVWLFLYVSI). The Mitochondrial intermembrane segment spans residues 257–261 (YWWGS).

The protein belongs to the cytochrome c oxidase subunit 3 family. Component of the cytochrome c oxidase (complex IV, CIV), a multisubunit enzyme composed of 14 subunits. The complex is composed of a catalytic core of 3 subunits MT-CO1, MT-CO2 and MT-CO3, encoded in the mitochondrial DNA, and 11 supernumerary subunits COX4I, COX5A, COX5B, COX6A, COX6B, COX6C, COX7A, COX7B, COX7C, COX8 and NDUFA4, which are encoded in the nuclear genome. The complex exists as a monomer or a dimer and forms supercomplexes (SCs) in the inner mitochondrial membrane with NADH-ubiquinone oxidoreductase (complex I, CI) and ubiquinol-cytochrome c oxidoreductase (cytochrome b-c1 complex, complex III, CIII), resulting in different assemblies (supercomplex SCI(1)III(2)IV(1) and megacomplex MCI(2)III(2)IV(2)).

The protein resides in the mitochondrion inner membrane. It carries out the reaction 4 Fe(II)-[cytochrome c] + O2 + 8 H(+)(in) = 4 Fe(III)-[cytochrome c] + 2 H2O + 4 H(+)(out). Component of the cytochrome c oxidase, the last enzyme in the mitochondrial electron transport chain which drives oxidative phosphorylation. The respiratory chain contains 3 multisubunit complexes succinate dehydrogenase (complex II, CII), ubiquinol-cytochrome c oxidoreductase (cytochrome b-c1 complex, complex III, CIII) and cytochrome c oxidase (complex IV, CIV), that cooperate to transfer electrons derived from NADH and succinate to molecular oxygen, creating an electrochemical gradient over the inner membrane that drives transmembrane transport and the ATP synthase. Cytochrome c oxidase is the component of the respiratory chain that catalyzes the reduction of oxygen to water. Electrons originating from reduced cytochrome c in the intermembrane space (IMS) are transferred via the dinuclear copper A center (CU(A)) of subunit 2 and heme A of subunit 1 to the active site in subunit 1, a binuclear center (BNC) formed by heme A3 and copper B (CU(B)). The BNC reduces molecular oxygen to 2 water molecules using 4 electrons from cytochrome c in the IMS and 4 protons from the mitochondrial matrix. The polypeptide is Cytochrome c oxidase subunit 3 (MT-CO3) (Gazella subgutturosa (Goitred gazelle)).